The following is an 89-amino-acid chain: Small ribosomal subunit protein uS15 (89 aa).

Belongs to the universal ribosomal protein uS15 family. In terms of assembly, part of the 30S ribosomal subunit. Forms a bridge to the 50S subunit in the 70S ribosome, contacting the 23S rRNA.

Functionally, one of the primary rRNA binding proteins, it binds directly to 16S rRNA where it helps nucleate assembly of the platform of the 30S subunit by binding and bridging several RNA helices of the 16S rRNA. In terms of biological role, forms an intersubunit bridge (bridge B4) with the 23S rRNA of the 50S subunit in the ribosome. The protein is Small ribosomal subunit protein uS15 of Vibrio cholerae serotype O1 (strain ATCC 39541 / Classical Ogawa 395 / O395).